The chain runs to 306 residues: UDP-N-acetylenolpyruvoylglucosamine reductase (306 aa).

Residues 33–197 form the FAD-binding PCMH-type domain; that stretch reads TGGEADFYLS…LEAAFTLEPG (165 aa). R176 is an active-site residue. Residue S226 is the Proton donor of the active site. E296 is an active-site residue.

This sequence belongs to the MurB family. FAD is required as a cofactor.

The protein localises to the cytoplasm. The catalysed reaction is UDP-N-acetyl-alpha-D-muramate + NADP(+) = UDP-N-acetyl-3-O-(1-carboxyvinyl)-alpha-D-glucosamine + NADPH + H(+). Its pathway is cell wall biogenesis; peptidoglycan biosynthesis. Cell wall formation. The protein is UDP-N-acetylenolpyruvoylglucosamine reductase of Staphylococcus epidermidis (strain ATCC 35984 / DSM 28319 / BCRC 17069 / CCUG 31568 / BM 3577 / RP62A).